The sequence spans 272 residues: Undecaprenyl-diphosphatase (272 aa).

The next 8 helical transmembrane spans lie at 4 to 24 (IHSL…EFLP), 45 to 65 (AETF…VMFW), 89 to 109 (LTLG…LVFH), 115 to 135 (LFNP…LIAA), 152 to 174 (TYRQ…FSRS), 189 to 209 (YAAS…ATAL), 225 to 245 (MFAV…KTFL), and 251 to 271 (ISFI…YVVF).

The protein belongs to the UppP family.

The protein resides in the cell inner membrane. The catalysed reaction is di-trans,octa-cis-undecaprenyl diphosphate + H2O = di-trans,octa-cis-undecaprenyl phosphate + phosphate + H(+). Catalyzes the dephosphorylation of undecaprenyl diphosphate (UPP). Confers resistance to bacitracin. This Citrobacter koseri (strain ATCC BAA-895 / CDC 4225-83 / SGSC4696) protein is Undecaprenyl-diphosphatase.